A 190-amino-acid polypeptide reads, in one-letter code: Ribosome maturation factor RimM (190 aa).

Positions 95–171 constitute a PRC barrel domain; it reads DPDEFYDHEL…VVMIEPPEGL (77 aa). The disordered stretch occupies residues 169–190; sequence EGLLDPDFGDKSNSDNSNSDND.

This sequence belongs to the RimM family. In terms of assembly, binds ribosomal protein uS19.

Its subcellular location is the cytoplasm. Its function is as follows. An accessory protein needed during the final step in the assembly of 30S ribosomal subunit, possibly for assembly of the head region. Essential for efficient processing of 16S rRNA. May be needed both before and after RbfA during the maturation of 16S rRNA. It has affinity for free ribosomal 30S subunits but not for 70S ribosomes. The sequence is that of Ribosome maturation factor RimM from Rhodococcus erythropolis (strain PR4 / NBRC 100887).